Reading from the N-terminus, the 62-residue chain is Small ribosomal subunit protein eS17 (62 aa).

Belongs to the eukaryotic ribosomal protein eS17 family.

This Methanoculleus marisnigri (strain ATCC 35101 / DSM 1498 / JR1) protein is Small ribosomal subunit protein eS17.